A 322-amino-acid chain; its full sequence is Phosphoenolpyruvate transferase (322 aa).

D58 provides a ligand contact to 7,8-didemethyl-8-hydroxy-5-deazariboflavin.

The protein belongs to the CofD family. In terms of assembly, homodimer. Mg(2+) serves as cofactor.

The enzyme catalyses enolpyruvoyl-2-diphospho-5'-guanosine + 7,8-didemethyl-8-hydroxy-5-deazariboflavin = dehydro coenzyme F420-0 + GMP + H(+). Its pathway is cofactor biosynthesis; coenzyme F420 biosynthesis. Functionally, catalyzes the transfer of the phosphoenolpyruvate moiety from enoylpyruvoyl-2-diphospho-5'-guanosine (EPPG) to 7,8-didemethyl-8-hydroxy-5-deazariboflavin (FO) with the formation of dehydro coenzyme F420-0 and GMP. In Thermobifida fusca (strain YX), this protein is Phosphoenolpyruvate transferase.